The sequence spans 507 residues: Glucose transporter type 3 (507 aa).

The interval 1–26 (MRKGGIQDAEPVEPPQSSRKSGTWFA) is disordered. Residues 1-53 (MRKGGIQDAEPVEPPQSSRKSGTWFAKRPSEMPERHVERAPVRQKINNVGLYK) lie on the Cytoplasmic side of the membrane. A helical membrane pass occupies residues 54–74 (ATLYSNIGSFFFGIAVGWSGT). Over 75–95 (AERSVMEQHSYSFQPTELQWS) the chain is Extracellular. A helical membrane pass occupies residues 96 to 116 (GVCILLTLGAALWCLPMGLMV). At 117–124 (RLLGCRRT) the chain is on the cytoplasmic side. The helical transmembrane segment at 125–145 (ILIQLLPNFLGWFLTVFARSV) threads the bilayer. Residues 146–152 (PMLYAGR) are Extracellular-facing. The chain crosses the membrane as a helical span at residues 153–173 (FFLGMCGGAHCVVVPIYNAEI). Residues 174 to 183 (STTKKRGAMG) lie on the Cytoplasmic side of the membrane. A helical membrane pass occupies residues 184-204 (VVFEGACICGVIYSFAMSLFL). Over 205-207 (ELR) the chain is Extracellular. A helical membrane pass occupies residues 208 to 228 (IINFVNLGLLALGPLQILMPE). Residues 229–293 (SPAYYVDHGN…YKKVRRSLAR (65 aa)) are Cytoplasmic-facing. The chain crosses the membrane as a helical span at residues 294–314 (SLAIALLQKLCGALIFIFYGL). Residues 315-324 (NMLDCLRIRR) lie on the Extracellular side of the membrane. A helical membrane pass occupies residues 325-345 (EFGLILCLGLILGFLACFFLV). Topologically, residues 346-351 (DRLGRR) are cytoplasmic. A helical membrane pass occupies residues 352 to 372 (PLLIFSSAGIVFVSIYLGLHF). Over 373–374 (KV) the chain is Extracellular. Residues 375-395 (WMTMGLTVMSWIALFCIAIFV) form a helical membrane-spanning segment. Residues 396 to 420 (GCYTAGVGSLTWVLNAELLVRPMRP) lie on the Cytoplasmic side of the membrane. The helical transmembrane segment at 421–441 (LGCSIVCAFNWLTAFFVICWF) threads the bilayer. The Extracellular portion of the chain corresponds to 442-450 (GSHGVKCQP). Residues 451-471 (YLFLLFAIIASLILLFSLIYI) form a helical membrane-spanning segment. The Cytoplasmic portion of the chain corresponds to 472–507 (PETKKLSSAKIQQRLGGLINRPAVITFTSSSDSSNA).

It belongs to the major facilitator superfamily. Sugar transporter (TC 2.A.1.1) family. Glucose transporter subfamily.

The protein resides in the cell membrane. The protein localises to the perikaryon. It is found in the cell projection. Facilitative glucose transporter that can also mediate the uptake of various other monosaccharides across the cell membrane. The protein is Glucose transporter type 3 (Glut3) of Drosophila melanogaster (Fruit fly).